Reading from the N-terminus, the 419-residue chain is Tyrosine--tRNA ligase (419 aa).

Y34 provides a ligand contact to L-tyrosine. A 'HIGH' region motif is present at residues 39-48 (PTADSLHLGH). Residues Y169 and Q173 each contribute to the L-tyrosine site. A 'KMSKS' region motif is present at residues 229 to 233 (KFGKS). K232 lines the ATP pocket. Residues 352–419 (LNIIDLLVTS…KKKYFVLNFK (68 aa)) enclose the S4 RNA-binding domain.

It belongs to the class-I aminoacyl-tRNA synthetase family. TyrS type 1 subfamily. In terms of assembly, homodimer.

Its subcellular location is the cytoplasm. The enzyme catalyses tRNA(Tyr) + L-tyrosine + ATP = L-tyrosyl-tRNA(Tyr) + AMP + diphosphate + H(+). Its function is as follows. Catalyzes the attachment of tyrosine to tRNA(Tyr) in a two-step reaction: tyrosine is first activated by ATP to form Tyr-AMP and then transferred to the acceptor end of tRNA(Tyr). In Streptococcus agalactiae serotype V (strain ATCC BAA-611 / 2603 V/R), this protein is Tyrosine--tRNA ligase.